A 195-amino-acid chain; its full sequence is Peptidyl-tRNA hydrolase (195 aa).

Tyr17 provides a ligand contact to tRNA. The active-site Proton acceptor is the His22. Tyr68, Asn70, and Asn116 together coordinate tRNA.

Belongs to the PTH family. In terms of assembly, monomer.

The protein resides in the cytoplasm. It carries out the reaction an N-acyl-L-alpha-aminoacyl-tRNA + H2O = an N-acyl-L-amino acid + a tRNA + H(+). Its function is as follows. Hydrolyzes ribosome-free peptidyl-tRNAs (with 1 or more amino acids incorporated), which drop off the ribosome during protein synthesis, or as a result of ribosome stalling. In terms of biological role, catalyzes the release of premature peptidyl moieties from peptidyl-tRNA molecules trapped in stalled 50S ribosomal subunits, and thus maintains levels of free tRNAs and 50S ribosomes. This chain is Peptidyl-tRNA hydrolase, found in Shewanella putrefaciens (strain CN-32 / ATCC BAA-453).